We begin with the raw amino-acid sequence, 273 residues long: 4-hydroxy-tetrahydrodipicolinate reductase (273 aa).

Residues 12–17 and Glu-38 contribute to the NAD(+) site; that span reads GAGGRM. Residue Arg-39 coordinates NADP(+). Residues 102–104 and 126–129 each bind NAD(+); these read GTT and AANF. The active-site Proton donor/acceptor is His-159. His-160 is a (S)-2,3,4,5-tetrahydrodipicolinate binding site. The Proton donor role is filled by Lys-163. 169 to 170 serves as a coordination point for (S)-2,3,4,5-tetrahydrodipicolinate; the sequence is GT.

The protein belongs to the DapB family. As to quaternary structure, homotetramer.

The protein localises to the cytoplasm. The catalysed reaction is (S)-2,3,4,5-tetrahydrodipicolinate + NAD(+) + H2O = (2S,4S)-4-hydroxy-2,3,4,5-tetrahydrodipicolinate + NADH + H(+). The enzyme catalyses (S)-2,3,4,5-tetrahydrodipicolinate + NADP(+) + H2O = (2S,4S)-4-hydroxy-2,3,4,5-tetrahydrodipicolinate + NADPH + H(+). It participates in amino-acid biosynthesis; L-lysine biosynthesis via DAP pathway; (S)-tetrahydrodipicolinate from L-aspartate: step 4/4. In terms of biological role, catalyzes the conversion of 4-hydroxy-tetrahydrodipicolinate (HTPA) to tetrahydrodipicolinate. This chain is 4-hydroxy-tetrahydrodipicolinate reductase, found in Pectobacterium carotovorum subsp. carotovorum (strain PC1).